We begin with the raw amino-acid sequence, 313 residues long: tRNA dimethylallyltransferase (313 aa).

11-18 (GPTAGGKT) serves as a coordination point for ATP. Substrate is bound at residue 13 to 18 (TAGGKT). 3 interaction with substrate tRNA regions span residues 36–39 (DSAL), 160–164 (QRIGR), and 243–248 (RCVGYR).

Belongs to the IPP transferase family. In terms of assembly, monomer. Requires Mg(2+) as cofactor.

The enzyme catalyses adenosine(37) in tRNA + dimethylallyl diphosphate = N(6)-dimethylallyladenosine(37) in tRNA + diphosphate. Catalyzes the transfer of a dimethylallyl group onto the adenine at position 37 in tRNAs that read codons beginning with uridine, leading to the formation of N6-(dimethylallyl)adenosine (i(6)A). The sequence is that of tRNA dimethylallyltransferase from Neisseria meningitidis serogroup B (strain ATCC BAA-335 / MC58).